A 710-amino-acid chain; its full sequence is uncharacterized protein (710 aa).

Coiled coils occupy residues 273–298 and 477–528; these read LYRQ…MEEG and RYEK…VADT.

This is an uncharacterized protein from Coxiella burnetii (strain RSA 493 / Nine Mile phase I).